Consider the following 83-residue polypeptide: Protein CASPARIAN STRIP INTEGRITY FACTOR 2 (83 aa).

The signal sequence occupies residues 1 to 28; sequence MGLLPLVKKLGFIIFLLVSASAFALCSA. A disordered region spans residues 61–83; it reads SRDYGHSSPKPKLVRPPFKLIPN. The residue at position 64 (Tyr-64) is a Sulfotyrosine. Residues Pro-69 and Pro-71 each carry the hydroxyproline modification.

Interacts with the specific receptor kinases GSO1 and GSO2. As to expression, expressed exclusively in the root stele.

Peptide hormone required for contiguous Casparian strip diffusion barrier formation in roots via the regulation of CASPs protein expression and distribution in a GSO1-GSO2 signaling pathway. The Casparian strip is required for ion homeostasis (e.g. iron and potassium ions). The sequence is that of Protein CASPARIAN STRIP INTEGRITY FACTOR 2 from Arabidopsis thaliana (Mouse-ear cress).